We begin with the raw amino-acid sequence, 137 residues long: Protein MesC (137 aa).

The polypeptide is Protein MesC (mesC) (Leuconostoc mesenteroides).